A 226-amino-acid chain; its full sequence is uncharacterized protein (226 aa).

A signal peptide spans 1–18; it reads MRRIGLCISLLVTVLVMS.

This is an uncharacterized protein from Bacillus subtilis (strain 168).